The following is a 1054-amino-acid chain: Carbamoyl phosphate synthase large chain (1054 aa).

The tract at residues methionine 1 to glutamate 402 is carboxyphosphate synthetic domain. ATP contacts are provided by arginine 129, arginine 169, glycine 175, glycine 176, arginine 208, valine 210, glutamate 215, glycine 241, valine 242, histidine 243, glutamine 285, and glutamate 299. The region spanning arginine 133–valine 328 is the ATP-grasp 1 domain. Mg(2+) is bound by residues glutamine 285, glutamate 299, and asparagine 301. Mn(2+) is bound by residues glutamine 285, glutamate 299, and asparagine 301. Residues isoleucine 403–aspartate 531 form an oligomerization domain region. Positions glutamate 532–glycine 914 are carbamoyl phosphate synthetic domain. In terms of domain architecture, ATP-grasp 2 spans glycine 658–leucine 849. 9 residues coordinate ATP: arginine 694, lysine 733, glutamate 740, glycine 765, valine 766, histidine 767, serine 768, glutamine 808, and glutamate 820. Positions 808, 820, and 822 each coordinate Mg(2+). Mn(2+)-binding residues include glutamine 808, glutamate 820, and asparagine 822. One can recognise an MGS-like domain in the interval glutamine 915 to threonine 1054. The interval glutamine 915–threonine 1054 is allosteric domain.

The protein belongs to the CarB family. In terms of assembly, composed of two chains; the small (or glutamine) chain promotes the hydrolysis of glutamine to ammonia, which is used by the large (or ammonia) chain to synthesize carbamoyl phosphate. Tetramer of heterodimers (alpha,beta)4. Mg(2+) serves as cofactor. Mn(2+) is required as a cofactor.

It carries out the reaction hydrogencarbonate + L-glutamine + 2 ATP + H2O = carbamoyl phosphate + L-glutamate + 2 ADP + phosphate + 2 H(+). The enzyme catalyses hydrogencarbonate + NH4(+) + 2 ATP = carbamoyl phosphate + 2 ADP + phosphate + 2 H(+). Its pathway is amino-acid biosynthesis; L-arginine biosynthesis; carbamoyl phosphate from bicarbonate: step 1/1. It functions in the pathway pyrimidine metabolism; UMP biosynthesis via de novo pathway; (S)-dihydroorotate from bicarbonate: step 1/3. Functionally, large subunit of the glutamine-dependent carbamoyl phosphate synthetase (CPSase). CPSase catalyzes the formation of carbamoyl phosphate from the ammonia moiety of glutamine, carbonate, and phosphate donated by ATP, constituting the first step of 2 biosynthetic pathways, one leading to arginine and/or urea and the other to pyrimidine nucleotides. The large subunit (synthetase) binds the substrates ammonia (free or transferred from glutamine from the small subunit), hydrogencarbonate and ATP and carries out an ATP-coupled ligase reaction, activating hydrogencarbonate by forming carboxy phosphate which reacts with ammonia to form carbamoyl phosphate. The polypeptide is Carbamoyl phosphate synthase large chain (Rubrobacter xylanophilus (strain DSM 9941 / JCM 11954 / NBRC 16129 / PRD-1)).